Here is a 348-residue protein sequence, read N- to C-terminus: Erythronate-4-phosphate dehydrogenase (348 aa).

Residues T46 and T67 each contribute to the substrate site. NAD(+) is bound at residue D147. R209 is a catalytic residue. D233 provides a ligand contact to NAD(+). E238 is a catalytic residue. H255 (proton donor) is an active-site residue. G258 is an NAD(+) binding site. Y259 provides a ligand contact to substrate.

Belongs to the D-isomer specific 2-hydroxyacid dehydrogenase family. PdxB subfamily. In terms of assembly, homodimer.

The protein localises to the cytoplasm. It carries out the reaction 4-phospho-D-erythronate + NAD(+) = (R)-3-hydroxy-2-oxo-4-phosphooxybutanoate + NADH + H(+). It functions in the pathway cofactor biosynthesis; pyridoxine 5'-phosphate biosynthesis; pyridoxine 5'-phosphate from D-erythrose 4-phosphate: step 2/5. Functionally, catalyzes the oxidation of erythronate-4-phosphate to 3-hydroxy-2-oxo-4-phosphonooxybutanoate. This chain is Erythronate-4-phosphate dehydrogenase, found in Bacteroides thetaiotaomicron (strain ATCC 29148 / DSM 2079 / JCM 5827 / CCUG 10774 / NCTC 10582 / VPI-5482 / E50).